The chain runs to 465 residues: MAKTLYQKVFDAHVVREVDGETPLIYIDRHLVHEVTSPQAFDGLRAMNRPLRRPDLTWATMDHNVSTTTKDIAASGEMARIQMETLADNCKEFGVRLYDLNHKYQGIVHVMGPELGITLPGTTIVCGDSHTATHGAFGSLAFGIGTSEVEHVMATQTLKQGRAKTMRISVNGKLAEGISAKDVVLAIIGQVGHAGGTGYVVEFAGEAIAGLSMEGRMTVCNMAIELGAKAGMIAPDQTTIDYIRGKEFAPKGESLDQAIAYWLSLKSDQGAHFDAEVILDAADIAPQVTWGTNPGQVIAVNEPIPAPESFSDLMEQQSARKALAYMDLQPGQKLTDVAIDKVFIGSCTNSRIEDLRAAAAIARGRKVAAGVQALVVPGSEQVKAQAEAEGLDKIFLEAGFEWRLPGCSMCLAMNNDRLQPGERCASTSNRNFEGRQGRAGRTHLVSPAMAAAAAVTGRFADIRAL.

Residues cysteine 347, cysteine 407, and cysteine 410 each coordinate [4Fe-4S] cluster.

It belongs to the aconitase/IPM isomerase family. LeuC type 1 subfamily. Heterodimer of LeuC and LeuD. [4Fe-4S] cluster is required as a cofactor.

It catalyses the reaction (2R,3S)-3-isopropylmalate = (2S)-2-isopropylmalate. It functions in the pathway amino-acid biosynthesis; L-leucine biosynthesis; L-leucine from 3-methyl-2-oxobutanoate: step 2/4. Its function is as follows. Catalyzes the isomerization between 2-isopropylmalate and 3-isopropylmalate, via the formation of 2-isopropylmaleate. The protein is 3-isopropylmalate dehydratase large subunit of Aeromonas salmonicida (strain A449).